Here is an 87-residue protein sequence, read N- to C-terminus: Bombyxin B-10 (87 aa).

Positions 1–19 are cleaved as a signal peptide; it reads MKTILIFLVVISLMYSGEA. Cystine bridges form between Cys27–Cys73, Cys39–Cys86, and Cys72–Cys77. The propeptide at 46–64 is bombyxin B-10 C peptide; that stretch reads SGAQYAPYFWTRQYLGSRG.

The protein belongs to the insulin family. As to quaternary structure, heterodimer of a B chain and an A chain linked by two disulfide bonds.

It is found in the secreted. Functionally, brain peptide responsible for activation of prothoracic glands to produce ecdysone in insects. The protein is Bombyxin B-10 (BBXB10) of Bombyx mori (Silk moth).